Consider the following 577-residue polypeptide: Beta-glucosidase 30 (577 aa).

The first 23 residues, 1–23 (MAKGSWFFIILFIISMLENMINS), serve as a signal peptide directing secretion. Residues glutamine 45, histidine 148, and 193-194 (NE) each bind a beta-D-glucoside. Glutamate 194 (proton donor) is an active-site residue. Cysteines 213 and 221 form a disulfide. N-linked (GlcNAc...) asparagine glycosylation occurs at asparagine 328. Tyrosine 338 contributes to the a beta-D-glucoside binding site. An N-linked (GlcNAc...) asparagine glycan is attached at asparagine 368. Residues glutamate 410, tryptophan 460, 467 to 468 (EW), and phenylalanine 476 each bind a beta-D-glucoside. The active-site Nucleophile is the glutamate 410. Residues asparagine 524 and asparagine 544 are each glycosylated (N-linked (GlcNAc...) asparagine).

Belongs to the glycosyl hydrolase 1 family.

The enzyme catalyses Hydrolysis of terminal, non-reducing beta-D-glucosyl residues with release of beta-D-glucose.. This is Beta-glucosidase 30 from Arabidopsis thaliana (Mouse-ear cress).